We begin with the raw amino-acid sequence, 126 residues long: NADH-quinone oxidoreductase subunit A (126 aa).

3 consecutive transmembrane segments (helical) span residues 16–36 (ILVL…AAAI), 73–93 (ILFI…VAFG), and 95–115 (MSMT…VGFA).

The protein belongs to the complex I subunit 3 family. NDH-1 is composed of 14 different subunits. Subunits NuoA, H, J, K, L, M, N constitute the membrane sector of the complex.

It is found in the cell inner membrane. The enzyme catalyses a quinone + NADH + 5 H(+)(in) = a quinol + NAD(+) + 4 H(+)(out). Functionally, NDH-1 shuttles electrons from NADH, via FMN and iron-sulfur (Fe-S) centers, to quinones in the respiratory chain. The immediate electron acceptor for the enzyme in this species is believed to be ubiquinone. Couples the redox reaction to proton translocation (for every two electrons transferred, four hydrogen ions are translocated across the cytoplasmic membrane), and thus conserves the redox energy in a proton gradient. The protein is NADH-quinone oxidoreductase subunit A of Rhodobacter capsulatus (Rhodopseudomonas capsulata).